The primary structure comprises 469 residues: KASVGFKAGVKEYKLTYYTPEYEVKDTDILAAFRVTPQPGVPPEEAGAAVAAESSTGTWTTVWTDGLTSLDRYKGRCYHIEPVAGEENQYICYVAYPLDLFEEGSVTNMFTSIVGNVFGFKALRALRLEDLRIPTSYTKTFQGPPHGIQVERDKLNKYGRPLLGCTIKPKLGLSAKNYGRAVYECLRGGLDFTKDDENVNSQPFMRWRDRFVFCAEAIYKAQAETGEIKGHYLNATAGTCEEMMKRAIFARELGVPIVMHDYLTGGFTANTSLAHYCRDNGLLLHIHRAMHAVIDRQKNHGMHFRVLAKALRLSGGDHIHAGTVVGKLEGERDITLGFVDLLRDDFIEKDRSRGIYFTQDWVSLPGVLPVASGGIHVWHMPALTEIFGDDSVLQFGGGTLGHPWGNAPGAVANRVALEACVKARNEGRDLAREGNEIIREASKWSPELAAACEVWKEIKFEFQAVDTLD.

Lysine 7 is modified (N6,N6,N6-trimethyllysine). Asparagine 116 and threonine 166 together coordinate substrate. Lysine 168 serves as the catalytic Proton acceptor. A substrate-binding site is contributed by lysine 170. 3 residues coordinate Mg(2+): lysine 194, aspartate 196, and glutamate 197. At lysine 194 the chain carries N6-carboxylysine. Histidine 287 functions as the Proton acceptor in the catalytic mechanism. Residues arginine 288, histidine 320, and serine 372 each coordinate substrate.

The protein belongs to the RuBisCO large chain family. Type I subfamily. As to quaternary structure, heterohexadecamer of 8 large chains and 8 small chains; disulfide-linked. The disulfide link is formed within the large subunit homodimers. Requires Mg(2+) as cofactor. Post-translationally, the disulfide bond which can form in the large chain dimeric partners within the hexadecamer appears to be associated with oxidative stress and protein turnover.

The protein localises to the plastid. Its subcellular location is the chloroplast. The catalysed reaction is 2 (2R)-3-phosphoglycerate + 2 H(+) = D-ribulose 1,5-bisphosphate + CO2 + H2O. It carries out the reaction D-ribulose 1,5-bisphosphate + O2 = 2-phosphoglycolate + (2R)-3-phosphoglycerate + 2 H(+). Its function is as follows. RuBisCO catalyzes two reactions: the carboxylation of D-ribulose 1,5-bisphosphate, the primary event in carbon dioxide fixation, as well as the oxidative fragmentation of the pentose substrate in the photorespiration process. Both reactions occur simultaneously and in competition at the same active site. This chain is Ribulose bisphosphate carboxylase large chain, found in Pachira aquatica (Guiana chestnut).